Here is a 108-residue protein sequence, read N- to C-terminus: SPbeta prophage-derived uncharacterized HTH-type transcriptional regulator YonR (108 aa).

Positions 6-60 (LKKCRTSKGYSQQRMADFLGITRQGYGKYEIGKAEPDLKTLTKLSNILGVSTDFL) constitute an HTH cro/C1-type domain. Positions 17–36 (QQRMADFLGITRQGYGKYEI) form a DNA-binding region, H-T-H motif.

This Bacillus subtilis (strain 168) protein is SPbeta prophage-derived uncharacterized HTH-type transcriptional regulator YonR (yonR).